Here is a 588-residue protein sequence, read N- to C-terminus: Adenine deaminase (588 aa).

The protein belongs to the metallo-dependent hydrolases superfamily. Adenine deaminase family. Homodimer. It depends on Mn(2+) as a cofactor.

It catalyses the reaction adenine + H2O + H(+) = hypoxanthine + NH4(+). This is Adenine deaminase from Escherichia coli (strain K12 / DH10B).